A 420-amino-acid chain; its full sequence is Glucose-1-phosphate adenylyltransferase (420 aa).

Alpha-D-glucose 1-phosphate contacts are provided by residues Y97, G162, 177–178, and S188; that span reads EK.

This sequence belongs to the bacterial/plant glucose-1-phosphate adenylyltransferase family. As to quaternary structure, homotetramer.

It carries out the reaction alpha-D-glucose 1-phosphate + ATP + H(+) = ADP-alpha-D-glucose + diphosphate. Its pathway is glycan biosynthesis; glycogen biosynthesis. Its function is as follows. Involved in the biosynthesis of ADP-glucose, a building block required for the elongation reactions to produce glycogen. Catalyzes the reaction between ATP and alpha-D-glucose 1-phosphate (G1P) to produce pyrophosphate and ADP-Glc. This Pseudothermotoga lettingae (strain ATCC BAA-301 / DSM 14385 / NBRC 107922 / TMO) (Thermotoga lettingae) protein is Glucose-1-phosphate adenylyltransferase.